Reading from the N-terminus, the 315-residue chain is Glycine--tRNA ligase alpha subunit (315 aa).

The protein belongs to the class-II aminoacyl-tRNA synthetase family. Tetramer of two alpha and two beta subunits.

The protein localises to the cytoplasm. It carries out the reaction tRNA(Gly) + glycine + ATP = glycyl-tRNA(Gly) + AMP + diphosphate. The polypeptide is Glycine--tRNA ligase alpha subunit (Pseudomonas putida (strain W619)).